Here is a 351-residue protein sequence, read N- to C-terminus: UPF0252 protein MJECL39 (351 aa).

2 consecutive transmembrane segments (helical) span residues 58–78 and 91–111; these read FITF…VWLW and IIIC…LCGV.

This sequence belongs to the UPF0252 family.

The protein localises to the cell membrane. The sequence is that of UPF0252 protein MJECL39 from Methanocaldococcus jannaschii (strain ATCC 43067 / DSM 2661 / JAL-1 / JCM 10045 / NBRC 100440) (Methanococcus jannaschii).